A 536-amino-acid chain; its full sequence is Probable galacturonosyltransferase 10 (536 aa).

Residues 1–16 (MRRRGGDSFRRAGRRK) lie on the Cytoplasmic side of the membrane. The chain crosses the membrane as a helical; Signal-anchor for type II membrane protein span at residues 17–37 (ISNVVWWVLSGIALLLFFLIL). At 38-536 (SKAGHIEPRP…SPFMQQCNFH (499 aa)) the chain is on the lumenal side. N-linked (GlcNAc...) asparagine glycans are attached at residues N64, N246, N300, N403, and N436.

It belongs to the glycosyltransferase 8 family. As to expression, expressed in roots, inflorescences, siliques, leaves and stems.

The protein resides in the golgi apparatus membrane. It participates in glycan metabolism; pectin biosynthesis. Functionally, may be involved in pectin and/or xylans biosynthesis in cell walls. This is Probable galacturonosyltransferase 10 (GAUT10) from Arabidopsis thaliana (Mouse-ear cress).